We begin with the raw amino-acid sequence, 715 residues long: ABC transporter F family member 3 (715 aa).

Thr2 is modified (N-acetylthreonine). The segment at 96 to 118 (VRMNDGMDDGPVKKKKPEPVDGP) is disordered. 2 consecutive ABC transporter domains span residues 175 to 436 (IHMD…KNQQ) and 504 to 713 (ISFS…LLQS). Residues 207-214 (GRNGTGKT) and 537-544 (GPNGIGKS) each bind ATP.

This sequence belongs to the ABC transporter superfamily. ABCF family. EF3 (TC 3.A.1.121) subfamily.

The polypeptide is ABC transporter F family member 3 (ABCF3) (Arabidopsis thaliana (Mouse-ear cress)).